A 636-amino-acid chain; its full sequence is Probable potassium transport system protein Kup (636 aa).

Helical transmembrane passes span 23–43 (LVIGAIGVVFGDIGTSPLYSL), 63–83 (IISLLFWAMTIVVSIKYVVFV), 114–134 (VLMMLGIFGACMFYGDAVITP), 150–170 (PQLSRFVIPITLVILVALFLI), 182–202 (FGPVMVVWFVTLGLLGLYNLV), 217–237 (ISFLIAHSLQAFIVLGSVFLV), 260–280 (WFVLVMPCLILNYFGQGAMLL), 298–318 (LLIPMVVLATCATVIASQAVI), 350–370 (IYLPVINWILLVLVVAVVISF), 379–399 (AYGIAVTTTMVITTFLAAVVM), 407–427 (PALVTLLGLSFLLVDLAFFAA), and 432–452 (VAEGGWFPLLLGSTAFFLLMT).

This sequence belongs to the HAK/KUP transporter (TC 2.A.72) family.

Its subcellular location is the cell inner membrane. The enzyme catalyses K(+)(in) + H(+)(in) = K(+)(out) + H(+)(out). In terms of biological role, transport of potassium into the cell. Likely operates as a K(+):H(+) symporter. In Cupriavidus pinatubonensis (strain JMP 134 / LMG 1197) (Cupriavidus necator (strain JMP 134)), this protein is Probable potassium transport system protein Kup.